A 406-amino-acid chain; its full sequence is Bifunctional protein GlmU (406 aa).

The pyrophosphorylase stretch occupies residues 1–221 (MFIILAAGHG…EEEATGINSR (221 aa)). Residues 5–8 (LAAG), lysine 19, glutamine 68, 73–74 (GT), 98–100 (YGD), glycine 134, glutamate 148, asparagine 162, and asparagine 219 contribute to the UDP-N-acetyl-alpha-D-glucosamine site. Aspartate 100 contributes to the Mg(2+) binding site. Asparagine 219 lines the Mg(2+) pocket. The segment at 222–242 (NDLAKAEFYFQENRRKFFTDS) is linker. Residues 243-406 (GVTLVAPETV…RRKQMVKKIK (164 aa)) form an N-acetyltransferase region. Position 308 (lysine 308) interacts with UDP-N-acetyl-alpha-D-glucosamine. Histidine 320 (proton acceptor) is an active-site residue. Tyrosine 323 and asparagine 334 together coordinate UDP-N-acetyl-alpha-D-glucosamine. Residues alanine 337, 343–344 (NY), alanine 380, and arginine 397 contribute to the acetyl-CoA site.

This sequence in the N-terminal section; belongs to the N-acetylglucosamine-1-phosphate uridyltransferase family. The protein in the C-terminal section; belongs to the transferase hexapeptide repeat family. In terms of assembly, homotrimer. Requires Mg(2+) as cofactor.

The protein resides in the cytoplasm. It carries out the reaction alpha-D-glucosamine 1-phosphate + acetyl-CoA = N-acetyl-alpha-D-glucosamine 1-phosphate + CoA + H(+). It catalyses the reaction N-acetyl-alpha-D-glucosamine 1-phosphate + UTP + H(+) = UDP-N-acetyl-alpha-D-glucosamine + diphosphate. It participates in nucleotide-sugar biosynthesis; UDP-N-acetyl-alpha-D-glucosamine biosynthesis; N-acetyl-alpha-D-glucosamine 1-phosphate from alpha-D-glucosamine 6-phosphate (route II): step 2/2. The protein operates within nucleotide-sugar biosynthesis; UDP-N-acetyl-alpha-D-glucosamine biosynthesis; UDP-N-acetyl-alpha-D-glucosamine from N-acetyl-alpha-D-glucosamine 1-phosphate: step 1/1. It functions in the pathway bacterial outer membrane biogenesis; LPS lipid A biosynthesis. Functionally, catalyzes the last two sequential reactions in the de novo biosynthetic pathway for UDP-N-acetylglucosamine (UDP-GlcNAc). The C-terminal domain catalyzes the transfer of acetyl group from acetyl coenzyme A to glucosamine-1-phosphate (GlcN-1-P) to produce N-acetylglucosamine-1-phosphate (GlcNAc-1-P), which is converted into UDP-GlcNAc by the transfer of uridine 5-monophosphate (from uridine 5-triphosphate), a reaction catalyzed by the N-terminal domain. The protein is Bifunctional protein GlmU of Wolbachia sp. subsp. Brugia malayi (strain TRS).